A 1009-amino-acid chain; its full sequence is MTAPVQWRTFFHQCLIHRIDASEFRNLSKLLFQKCPIAESALLDALLQTRSESRIKWDPLLPLYIDCLCRMGRVRTSTVLTSLLKYSSIHDKPQLPTSEGKDGSKCYTLMTDIRVIQDAMLSVSTGSTPKTNAEAIAIFFAIIDWIHAVASWHNSHFDPGQHSSGMMSSPDVVSLFESLGILLAALSGTGKGLEVLSADSHEGLKVKLGQALSAYLPLCVEVSLPLRNRLDGLQKEFNLYGERAPKSLDVPMMENMNVNALQFEASVMDGPVINSRAGLYVFINAMLVGRPLVDDSMLINYLANRYGGHYEALIEEILTAAFDVLSNGMYRNESSRTMFVFRSFLVNKLPAFFAAMLASTMVSIPMEMCISHALSRLDPNTFPSFSQMFEMQGNTVLSDVRQEFLFACASHKLIPESSIERLLGENPMQTLPVGYNKDELVSQINANPERAEQLINEIESMEGNAGAIIGAITEVMHNLCNQKETMTLKNICNSLSRRPQALDVVLIFRNPKQVLQPLCALLDSWHWDEDQGEYQPVYDEFGSILLLVLAFKYRFDLRPADLGISSNDSFVLRLLERGTCSQKLDALDEKQNKNLGSWIAALFIAEGISEETMSACSPQEFYLLVATLFSQSLEACETGKLEFDTLKGGFEYLLEPFLLPSLIFALTWLGDHIWETELDPSIPLKALQSLVNPSSISGEAREIHRTVLNITARTLEEQLKDVRTRHPSRTDIKPILDSLEPCLSFQLVGSSHRSELESWTTHSGGGLLGGIRSTFQSLVLWSTNPEVSMAPPPYTHRQLIAGVRMLGASRVLPPLIEELKLQTEAGNGPLALDLAATLICAPMAETFSVEQNSHQPVDPNKEALPRCGILTLRDVLALQHENVPKISEKDPLRAEVLVRLYRRVNALLAPPSQVPNLDVNNIIQNMQLGGVGVGVGAGQMELDAAGAADHGVGPDDAENIHRMIDNAAAAAALDSSGTGLDTSIDDVLNAADMAVGNPEFLDLDMEGMF.

The protein belongs to the Mediator complex subunit 5 family. As to quaternary structure, component of the Mediator complex.

It localises to the nucleus. Its function is as follows. Component of the Mediator complex, a coactivator involved in the regulated transcription of nearly all RNA polymerase II-dependent genes. Mediator functions as a bridge to convey information from gene-specific regulatory proteins to the basal RNA polymerase II transcription machinery. Mediator is recruited to promoters by direct interactions with regulatory proteins and serves as a scaffold for the assembly of a functional preinitiation complex with RNA polymerase II and the general transcription factors. This chain is Mediator of RNA polymerase II transcription subunit 5 (nut1), found in Neosartorya fischeri (strain ATCC 1020 / DSM 3700 / CBS 544.65 / FGSC A1164 / JCM 1740 / NRRL 181 / WB 181) (Aspergillus fischerianus).